A 439-amino-acid polypeptide reads, in one-letter code: Serine--tRNA ligase (439 aa).

An L-serine-binding site is contributed by Thr247–Glu249. ATP is bound at residue Arg278–Glu280. Residue Glu301 participates in L-serine binding. ATP is bound at residue Glu365–Ser368. An L-serine-binding site is contributed by Ser400.

Belongs to the class-II aminoacyl-tRNA synthetase family. Type-1 seryl-tRNA synthetase subfamily. As to quaternary structure, homodimer. The tRNA molecule binds across the dimer.

The protein localises to the cytoplasm. It catalyses the reaction tRNA(Ser) + L-serine + ATP = L-seryl-tRNA(Ser) + AMP + diphosphate + H(+). The catalysed reaction is tRNA(Sec) + L-serine + ATP = L-seryl-tRNA(Sec) + AMP + diphosphate + H(+). The protein operates within aminoacyl-tRNA biosynthesis; selenocysteinyl-tRNA(Sec) biosynthesis; L-seryl-tRNA(Sec) from L-serine and tRNA(Sec): step 1/1. Functionally, catalyzes the attachment of serine to tRNA(Ser). Is also able to aminoacylate tRNA(Sec) with serine, to form the misacylated tRNA L-seryl-tRNA(Sec), which will be further converted into selenocysteinyl-tRNA(Sec). The protein is Serine--tRNA ligase of Paracidovorax citrulli (strain AAC00-1) (Acidovorax citrulli).